The sequence spans 460 residues: Glutamate--tRNA ligase 2 (460 aa).

Residues 8-18 (PSPTGFLHVGG) carry the 'HIGH' region motif. A 'KMSKS' region motif is present at residues 237–241 (KLSKR). Residue Lys240 participates in ATP binding.

The protein belongs to the class-I aminoacyl-tRNA synthetase family. Glutamate--tRNA ligase type 1 subfamily. In terms of assembly, monomer.

The protein resides in the cytoplasm. The catalysed reaction is tRNA(Glu) + L-glutamate + ATP = L-glutamyl-tRNA(Glu) + AMP + diphosphate. In terms of biological role, catalyzes the attachment of glutamate to tRNA(Glu) in a two-step reaction: glutamate is first activated by ATP to form Glu-AMP and then transferred to the acceptor end of tRNA(Glu). In Campylobacter fetus subsp. fetus (strain 82-40), this protein is Glutamate--tRNA ligase 2.